The primary structure comprises 696 residues: Verrucotoxin subunit beta (696 aa).

A B30.2/SPRY domain is found at 506–696 (HMPGVETIKD…GCTTESQWSN (191 aa)).

Belongs to the SNTX/VTX toxin family. As to quaternary structure, tetramer composed of 2 alpha and 2 beta subunits. In terms of processing, glycosylated. Expressed by the venom gland.

Its subcellular location is the secreted. Its function is as follows. This lethal (towards mice) toxin induces hemolytic, cytolytic and hypotensive activities. Inhibits calcium channels and may activate ATP-sensitive potassium channels in frog atrial heart muscle. In guinea-pig ventricular myocytes, it modulates calcium channel activity through the beta-adrenoceptor-cAMP-PKA pathway (ADRB). In Synanceia verrucosa (Reef stonefish), this protein is Verrucotoxin subunit beta.